The sequence spans 108 residues: UPF0060 membrane protein SH0717 (108 aa).

4 consecutive transmembrane segments (helical) span residues 5–25 (IFIF…IWLW), 31–51 (SSWL…IATF), 60–80 (VYAA…YIVD), and 86–106 (KYDL…ILPS).

The protein belongs to the UPF0060 family.

Its subcellular location is the cell membrane. This Staphylococcus haemolyticus (strain JCSC1435) protein is UPF0060 membrane protein SH0717.